We begin with the raw amino-acid sequence, 237 residues long: Ribosomal RNA small subunit methyltransferase G (237 aa).

Residues glycine 78, phenylalanine 83, 129–130 (AE), and arginine 148 contribute to the S-adenosyl-L-methionine site.

Belongs to the methyltransferase superfamily. RNA methyltransferase RsmG family.

Its subcellular location is the cytoplasm. Specifically methylates the N7 position of a guanine in 16S rRNA. The chain is Ribosomal RNA small subunit methyltransferase G from Streptococcus pyogenes serotype M2 (strain MGAS10270).